The sequence spans 347 residues: O-methyltransferase aunE (347 aa).

Residue Trp-166 participates in S-adenosyl-L-methionine binding. His-265 serves as the catalytic Proton acceptor.

The protein belongs to the class I-like SAM-binding methyltransferase superfamily. Cation-independent O-methyltransferase family.

Its pathway is secondary metabolite biosynthesis. Its function is as follows. O-methyltransferase; part of the gene cluster that mediates the biosynthesis of aurasperone B, a dimeric gamma-naphthopyrone. The first step in the biosynthesis of aurasperone B is the production of gamma-naphthopyrone precursor YWA1 by the non-reducing polyketide synthase albA, via condensation of one acetyl-CoA starter unit with 6 malonyl-CoA units. YWA1 is then methylated by aunE at position C-6 to yield foncesin which is further methylated at position C-8 by aunD to produce fonsecin B. A key enzyme in the biosynthetic pathway is the cytochrome P450 monooxygenase aunB which catalyzes the oxidative dimerization of fonsecin B to aurasperone B. AunB also catalyzes the oxidative dimerization of rubrofusarin B into aurasperone A. The chain is O-methyltransferase aunE from Aspergillus niger (strain ATCC 1015 / CBS 113.46 / FGSC A1144 / LSHB Ac4 / NCTC 3858a / NRRL 328 / USDA 3528.7).